A 446-amino-acid chain; its full sequence is Peptide chain release factor 1, mitochondrial (446 aa).

The N-terminal 62 residues, 1–62, are a transit peptide targeting the mitochondrion; that stretch reads MSHHLCIWLF…LLNKSWSRGC (62 aa). Residues 298-362 form a GGQ domain region; it reads PKDLRVDTFR…LRARLYQQII (65 aa). Residues 312 to 314 carry the GGQ motif; that stretch reads GGQ. Glutamine 314 bears the N5-methylglutamine mark.

It belongs to the prokaryotic/mitochondrial release factor family. Post-translationally, methylation of glutamine in the GGQ triplet by HEMK1 is conserved from bacteria to mammals.

It is found in the mitochondrion. Mitochondrial peptide chain release factor that directs the termination of translation in response to the peptide chain non-canonical stop codons AGG and AGA. Non-canonical termination codons AGG and AGA are found at the end of MT-CO1/COX1 and MT-ND6/ND6 open reading frames, respectively. Recognizes non-canonical stop codons via a network of interactions between the codon, MTRF1 and the ribosomal RNA (rRNA): in contrast to other translation release factors, which identify the codon in the A-site via direct interactions of amino acid side chains with the bases, MTRF1 repositions the first 2 bases of the stop codon to use an intricate network of interactions that includes residues of the release factor, the rRNA of the small ribosomal subunit, as well as neighboring bases of the mRNA. The chain is Peptide chain release factor 1, mitochondrial from Mus musculus (Mouse).